Reading from the N-terminus, the 102-residue chain is PqqA binding protein (102 aa).

Belongs to the PqqD family. As to quaternary structure, monomer. Interacts with PqqE.

Its pathway is cofactor biosynthesis; pyrroloquinoline quinone biosynthesis. In terms of biological role, functions as a PqqA binding protein and presents PqqA to PqqE, in the pyrroloquinoline quinone (PQQ) biosynthetic pathway. This chain is PqqA binding protein, found in Rhodopseudomonas palustris (strain TIE-1).